The primary structure comprises 250 residues: 5'-nucleotidase SurE (250 aa).

4 residues coordinate a divalent metal cation: Asp-8, Asp-9, Ser-39, and Asn-95.

The protein belongs to the SurE nucleotidase family. Requires a divalent metal cation as cofactor.

The protein resides in the cytoplasm. The enzyme catalyses a ribonucleoside 5'-phosphate + H2O = a ribonucleoside + phosphate. Nucleotidase that shows phosphatase activity on nucleoside 5'-monophosphates. The polypeptide is 5'-nucleotidase SurE (Cupriavidus taiwanensis (strain DSM 17343 / BCRC 17206 / CCUG 44338 / CIP 107171 / LMG 19424 / R1) (Ralstonia taiwanensis (strain LMG 19424))).